Reading from the N-terminus, the 131-residue chain is Large ribosomal subunit protein bL17 (131 aa).

Belongs to the bacterial ribosomal protein bL17 family. Part of the 50S ribosomal subunit. Contacts protein L32.

The protein is Large ribosomal subunit protein bL17 of Shewanella amazonensis (strain ATCC BAA-1098 / SB2B).